Consider the following 65-residue polypeptide: Large ribosomal subunit protein uL30 (65 aa).

Belongs to the universal ribosomal protein uL30 family. In terms of assembly, part of the 50S ribosomal subunit.

The chain is Large ribosomal subunit protein uL30 from Rickettsia bellii (strain OSU 85-389).